A 2540-amino-acid polypeptide reads, in one-letter code: Probable JmjC domain-containing histone demethylation protein 2C (2540 aa).

A compositionally biased stretch (polar residues) spans 278–309 (TRAQANSPRPAMNSQAAVPKQNTHQQQQQRSI). Residues 278 to 478 (TRAQANSPRP…TVSDHNSNDL (201 aa)) are disordered. Phosphoserine occurs at positions 317 and 320. The segment covering 323–342 (DEEKMKEEKYDYISRGENPK) has biased composition (basic and acidic residues). Positions 343-353 (GKNKHLMNKRR) are enriched in basic residues. The span at 354-371 (KPEEDEKKLNMKRLRTDN) shows a compositional bias: basic and acidic residues. Residues Ser-373 and Ser-376 each carry the phosphoserine modification. The segment covering 373–382 (SDFSESSDSE) has biased composition (low complexity). Composition is skewed to basic and acidic residues over residues 383 to 403 (NSNK…ELKN), 410 to 427 (NGEE…EETL), and 438 to 452 (QEDK…RKSV). Polar residues predominate over residues 464-478 (SSEQSTVSDHNSNDL). Phosphoserine occurs at positions 475 and 501. Thr-505 is subject to Phosphothreonine. 7 positions are modified to phosphoserine: Ser-601, Ser-617, Ser-638, Ser-639, Ser-641, Ser-652, and Ser-943. Positions 631–656 (VDTHKIKSSPSPEVVKPKITHSPDSV) are disordered. Disordered regions lie at residues 1242–1263 (GKVQ…SQAN) and 1614–1692 (NRRK…NSNT). A compositionally biased stretch (basic residues) spans 1643–1652 (KRQPKPTYKK). Over residues 1653-1669 (KQNDLQKRKGEIEEDLK) the composition is skewed to basic and acidic residues. A C6-type zinc finger spans residues 1846–1871 (CDACEATLFNIHWVCQKCGFVVCLDC). A compositionally biased stretch (polar residues) spans 1971–1991 (PESQQQNTPPKSEKNGGSSPE). The disordered stretch occupies residues 1971–2064 (PESQQQNTPP…LVSQNNEQGS (94 aa)). Ser-1989 is modified (phosphoserine). Positions 2016–2043 (AEQKAREEKKENKELTLENQIKEEREQD) are enriched in basic and acidic residues. Over residues 2045-2064 (SESPNGRTSPLVSQNNEQGS) the composition is skewed to polar residues. Residues 2066 to 2070 (LRDLL) carry the LXXLL motif motif. Residues Lys-2132 and Lys-2136 each participate in a glycyl lysine isopeptide (Lys-Gly) (interchain with G-Cter in SUMO2) cross-link. The JmjC domain maps to 2274 to 2498 (MPARYEDLLK…ESFHLTQELR (225 aa)). Fe cation-binding residues include His-2336, Glu-2338, and His-2466.

The protein belongs to the JHDM2 histone demethylase family. As to quaternary structure, interacts specifically with the ligand-binding domain of the thyroid receptor (TR). Requires the presence of thyroid hormone for its interaction. Fe(2+) serves as cofactor.

It localises to the nucleus. Probable histone demethylase that specifically demethylates 'Lys-9' of histone H3, thereby playing a central role in histone code. Demethylation of Lys residue generates formaldehyde and succinate. May be involved in hormone-dependent transcriptional activation, by participating in recruitment to androgen-receptor target genes. In Homo sapiens (Human), this protein is Probable JmjC domain-containing histone demethylation protein 2C (JMJD1C).